A 412-amino-acid polypeptide reads, in one-letter code: Multifunctional CCA protein (412 aa).

Gly-8 and Arg-11 together coordinate ATP. CTP-binding residues include Gly-8 and Arg-11. Mg(2+)-binding residues include Asp-21 and Asp-23. The ATP site is built by Arg-91, Arg-137, and Arg-140. Residues Arg-91, Arg-137, and Arg-140 each contribute to the CTP site. The HD domain occupies 228–329; it reads TGIHTLMTLS…VKLFDSIDAW (102 aa).

The protein belongs to the tRNA nucleotidyltransferase/poly(A) polymerase family. Bacterial CCA-adding enzyme type 1 subfamily. Monomer. Can also form homodimers and oligomers. It depends on Mg(2+) as a cofactor. Ni(2+) is required as a cofactor.

The catalysed reaction is a tRNA precursor + 2 CTP + ATP = a tRNA with a 3' CCA end + 3 diphosphate. The enzyme catalyses a tRNA with a 3' CCA end + 2 CTP + ATP = a tRNA with a 3' CCACCA end + 3 diphosphate. In terms of biological role, catalyzes the addition and repair of the essential 3'-terminal CCA sequence in tRNAs without using a nucleic acid template. Adds these three nucleotides in the order of C, C, and A to the tRNA nucleotide-73, using CTP and ATP as substrates and producing inorganic pyrophosphate. tRNA 3'-terminal CCA addition is required both for tRNA processing and repair. Also involved in tRNA surveillance by mediating tandem CCA addition to generate a CCACCA at the 3' terminus of unstable tRNAs. While stable tRNAs receive only 3'-terminal CCA, unstable tRNAs are marked with CCACCA and rapidly degraded. In Escherichia coli O157:H7, this protein is Multifunctional CCA protein.